The sequence spans 612 residues: MACPF domain-containing protein NSL1 (612 aa).

The region spanning 5 to 338 is the MACPF domain; that stretch reads NFTRLDAHSA…PPIEELHQFL (334 aa).

The protein belongs to the complement C6/C7/C8/C9 (TC 1.C.39) family.

Functionally, negatively controls the salicylic acid (SA)-mediated pathway of programmed cell death in plant immunity. This is MACPF domain-containing protein NSL1 (NSL1) from Arabidopsis thaliana (Mouse-ear cress).